The following is a 201-amino-acid chain: Small ribosomal subunit protein uS4 (201 aa).

In terms of domain architecture, S4 RNA-binding spans 93–155; sequence CRLDNIVYRM…SKSLSMFEVN (63 aa).

Belongs to the universal ribosomal protein uS4 family. Part of the 30S ribosomal subunit. Contacts protein S5. The interaction surface between S4 and S5 is involved in control of translational fidelity.

One of the primary rRNA binding proteins, it binds directly to 16S rRNA where it nucleates assembly of the body of the 30S subunit. Functionally, with S5 and S12 plays an important role in translational accuracy. The sequence is that of Small ribosomal subunit protein uS4 from Elusimicrobium minutum (strain Pei191).